Reading from the N-terminus, the 386-residue chain is WD repeat-containing protein 89 (386 aa).

WD repeat units follow at residues 21–65 (KEPT…VIRE), 68–106 (GYPGLNGVKFANSHDSVYSSCTDGTVKCWDARLASGKPV), 111–155 (GYPS…QDLS), 167–207 (THSD…EDDA), 213–253 (NSVS…TDEP), and 318–357 (GHAATVRSFCWNMQDDSLLTGGEDAQLLLWKPGAVEKTFT).

This Bos taurus (Bovine) protein is WD repeat-containing protein 89 (WDR89).